Here is a 206-residue protein sequence, read N- to C-terminus: MARYTGATCRLCRREGLKLFLKGDRCYTDKCAFARRGYAPGQHGQSRKKVSNYGLQLREKQKAKRIYGILERQFRGYYEEADRRRGITGENLLRLLEMRLDNVVYRLGYGNSRTEARQLVTHGHFLVNGKKVDIPSYQVSANDVITVCDKSKATEKFKTFAENPKTLPAWLSGNVEGFEGKVERQPAREDIDVPVNETLIVELYSK.

One can recognise an S4 RNA-binding domain in the interval 98–164 (MRLDNVVYRL…EKFKTFAENP (67 aa)).

It belongs to the universal ribosomal protein uS4 family. As to quaternary structure, part of the 30S ribosomal subunit. Contacts protein S5. The interaction surface between S4 and S5 is involved in control of translational fidelity.

One of the primary rRNA binding proteins, it binds directly to 16S rRNA where it nucleates assembly of the body of the 30S subunit. In terms of biological role, with S5 and S12 plays an important role in translational accuracy. The sequence is that of Small ribosomal subunit protein uS4A from Clostridium botulinum (strain ATCC 19397 / Type A).